Reading from the N-terminus, the 182-residue chain is Flavin prenyltransferase UbiX (182 aa).

Residues 9 to 11 (GAS), Ser-35, 86 to 89 (SIKT), and Arg-121 each bind FMN. The dimethylallyl phosphate site is built by Tyr-151 and Arg-167.

Belongs to the UbiX/PAD1 family.

It carries out the reaction dimethylallyl phosphate + FMNH2 = prenylated FMNH2 + phosphate. In terms of biological role, flavin prenyltransferase that catalyzes the synthesis of the prenylated FMN cofactor (prenyl-FMN) for 4-hydroxy-3-polyprenylbenzoic acid decarboxylase UbiD. The prenyltransferase is metal-independent and links a dimethylallyl moiety from dimethylallyl monophosphate (DMAP) to the flavin N5 and C6 atoms of FMN. The polypeptide is Flavin prenyltransferase UbiX (Archaeoglobus fulgidus (strain ATCC 49558 / DSM 4304 / JCM 9628 / NBRC 100126 / VC-16)).